The sequence spans 902 residues: Cytosolic 10-formyltetrahydrofolate dehydrogenase (902 aa).

The tract at residues 1–310 (MKIAVIGQSL…PASQYYKTAD (310 aa)) is hydrolase domain. 88–90 (QFI) is a (6R)-10-formyltetrahydrofolate binding site. His-106 serves as the catalytic Proton donor. Asp-142 contacts (6R)-10-formyltetrahydrofolate. The Carrier domain occupies 318 to 395 (DEEKKFSEEI…EFIQMVVRRL (78 aa)). O-(pantetheine 4'-phosphoryl)serine is present on Ser-354. The segment at 417–902 (TVKIPHQLFI…LKTKAVTIEY (486 aa)) is aldehyde dehydrogenase domain. Residues 571–573 (IPW), 597–600 (KPAQ), 630–635 (GSLIGQ), 650–651 (GS), and 673–674 (EL) contribute to the NADP(+) site. Glu-673 functions as the Proton acceptor in the catalytic mechanism. Cys-707 serves as the catalytic Proton donor. NADP(+) is bound by residues Lys-757 and 804-806 (ESF).

The protein in the N-terminal section; belongs to the GART family. It in the C-terminal section; belongs to the aldehyde dehydrogenase family. ALDH1L subfamily. Homotetramer. In terms of processing, phosphopantetheinylation at Ser-354 by AASDHPPT is required for the formyltetrahydrofolate dehydrogenase activity.

It localises to the cytoplasm. The protein localises to the cytosol. The enzyme catalyses (6R)-10-formyltetrahydrofolate + NADP(+) + H2O = (6S)-5,6,7,8-tetrahydrofolate + CO2 + NADPH + H(+). Functionally, cytosolic 10-formyltetrahydrofolate dehydrogenase that catalyzes the NADP(+)-dependent conversion of 10-formyltetrahydrofolate to tetrahydrofolate and carbon dioxide. May also have an NADP(+)-dependent aldehyde dehydrogenase activity towards formaldehyde, acetaldehyde, propionaldehyde, and benzaldehyde. Regulates reduced folate pools as well as glycine metabolism. The polypeptide is Cytosolic 10-formyltetrahydrofolate dehydrogenase (aldh1l1) (Xenopus tropicalis (Western clawed frog)).